The sequence spans 538 residues: Ubiquitin domain-containing protein DSK2a (538 aa).

Residues 18–93 (VAVNVRCSNG…VHMVRGFVPS (76 aa)) enclose the Ubiquitin-like domain. The interval 95–120 (PSAPAANAGNQTTAPQAVGSNDSSNL) is disordered. The segment covering 102–119 (AGNQTTAPQAVGSNDSSN) has biased composition (polar residues). STI1 domains lie at 138–179 (GNAM…QNLM) and 192–231 (NPQM…MREM). Residues 289–316 (QGVTTQGSDTSNNISAPNAETGTPNANP) form a disordered region. STI1 domains are found at residues 357–394 (SPLG…MNQL) and 398–433 (NPQL…MQQM). One can recognise a UBA domain in the interval 491 to 535 (PPEERFATQLQQLQEMGFYDRAENIRALLATNGNVNAAVERLLGS).

As to quaternary structure, interacts with 'Lys-48'-linked polyubiquitin chains via its UBA domain. Interacts with RPN10 and RPN13. Interacts with PEX2 and PEX12. As to expression, ubiquitous with a strong expression level in inflorescence.

The protein localises to the nucleus. It localises to the cytoplasm. Binds and presumably selects ubiquitin-conjugates for destruction. Prefers multiubiquitin chains rather than single ubiquitins, with a binding affinity for 'Lys-48'-linked ubiquitin chains. Acts as a ubiquitin receptor that associates with the 26S proteasomal docking subunit RPN10 for the indirect recognition of ubiquitinated substrates of ubiquitin/26S proteasome-mediated proteolysis (UPP). This chain is Ubiquitin domain-containing protein DSK2a (DSK2A), found in Arabidopsis thaliana (Mouse-ear cress).